A 234-amino-acid polypeptide reads, in one-letter code: Proteasome subunit alpha (234 aa).

This sequence belongs to the peptidase T1A family. The 20S proteasome core is composed of 14 alpha and 14 beta subunits that assemble into four stacked heptameric rings, resulting in a barrel-shaped structure. The two inner rings, each composed of seven catalytic beta subunits, are sandwiched by two outer rings, each composed of seven alpha subunits. The catalytic chamber with the active sites is on the inside of the barrel. Has a gated structure, the ends of the cylinder being occluded by the N-termini of the alpha-subunits. Is capped by the proteasome-associated ATPase, ARC.

The protein localises to the cytoplasm. The protein operates within protein degradation; proteasomal Pup-dependent pathway. With respect to regulation, the formation of the proteasomal ATPase ARC-20S proteasome complex, likely via the docking of the C-termini of ARC into the intersubunit pockets in the alpha-rings, may trigger opening of the gate for substrate entry. Interconversion between the open-gate and close-gate conformations leads to a dynamic regulation of the 20S proteasome proteolysis activity. Component of the proteasome core, a large protease complex with broad specificity involved in protein degradation. This is Proteasome subunit alpha from Acidothermus cellulolyticus (strain ATCC 43068 / DSM 8971 / 11B).